The sequence spans 110 residues: PTS system oligo-beta-mannoside-specific EIIA component (110 aa).

The PTS EIIA type-3 domain maps to 9-107; that stretch reads LTDEQISFQL…VKEMLDLFKT (99 aa). The Tele-phosphohistidine intermediate role is filled by His83. His83 carries the phosphohistidine; by HPr modification.

It is found in the cytoplasm. Its function is as follows. The phosphoenolpyruvate-dependent sugar phosphotransferase system (sugar PTS), a major carbohydrate active transport system, catalyzes the phosphorylation of incoming sugar substrates concomitantly with their translocation across the cell membrane. The enzyme II GmuABC PTS system is involved in the transport of oligo-glucomannans such as cellobiose or mannobiose. This chain is PTS system oligo-beta-mannoside-specific EIIA component, found in Bacillus subtilis (strain 168).